Reading from the N-terminus, the 473-residue chain is Argininosuccinate lyase (473 aa).

An N-acetylalanine modification is found at alanine 2. An N6-acetyllysine modification is found at lysine 7. Serine 27 is a 2-(N(omega)-L-arginino)succinate binding site. N6-acetyllysine is present on lysine 69. 2 residues coordinate 2-(N(omega)-L-arginino)succinate: asparagine 114 and threonine 159. Histidine 160 acts as the Proton acceptor in catalysis. Serine 281 (proton donor) is an active-site residue. An N6-acetyllysine modification is found at lysine 288. Asparagine 289, tyrosine 321, glutamine 326, and lysine 329 together coordinate 2-(N(omega)-L-arginino)succinate.

Belongs to the lyase 1 family. Argininosuccinate lyase subfamily. As to quaternary structure, homotetramer. Forms tissue-specific complexes with ASS1, SLC7A1, HSP90AA1 and nitric oxide synthase NOS1, NOS2 or NOS3; the complex maintenance is independent of ASL catalytic function. Post-translationally, acetylation modifies enzyme activity in response to alterations of extracellular nutrient availability. Acetylation increased with trichostin A (TSA) or with nicotinamide (NAM). Glucose increases acetylation by about a factor of 3 with decreasing enzyme activity. Acetylation on Lys-288 is decreased on the addition of extra amino acids resulting in activation of enzyme activity.

The catalysed reaction is 2-(N(omega)-L-arginino)succinate = fumarate + L-arginine. Its pathway is amino-acid biosynthesis; L-arginine biosynthesis; L-arginine from L-ornithine and carbamoyl phosphate: step 3/3. It functions in the pathway nitrogen metabolism; urea cycle; L-arginine and fumarate from (N(omega)-L-arginino)succinate: step 1/1. With respect to regulation, enzyme activity is regulated by acetylation. Functionally, catalyzes the reversible cleavage of L-argininosuccinate to fumarate and L-arginine, an intermediate step reaction in the urea cycle mostly providing for hepatic nitrogen detoxification into excretable urea as well as de novo L-arginine synthesis in nonhepatic tissues. Essential regulator of intracellular and extracellular L-arginine pools. As part of citrulline-nitric oxide cycle, forms tissue-specific multiprotein complexes with argininosuccinate synthase ASS1, transport protein SLC7A1 and nitric oxide synthase NOS1, NOS2 or NOS3, allowing for cell-autonomous L-arginine synthesis while channeling extracellular L-arginine to nitric oxide synthesis pathway. The chain is Argininosuccinate lyase (ASL) from Bos taurus (Bovine).